Consider the following 904-residue polypeptide: Nitrate reductase [NADH] 2 (904 aa).

Composition is skewed to polar residues over residues 1-10 (MAASVENRQF) and 35-50 (PSPN…NSTI). The disordered stretch occupies residues 1 to 65 (MAASVENRQF…SSEDDDDDDE (65 aa)). Residues 56 to 65 (SSEDDDDDDE) are compositionally biased toward acidic residues. Cys-183 is a Mo-molybdopterin binding site. Residues 531-606 (SKMYSMSEVR…LEDFRIGELI (76 aa)) enclose the Cytochrome b5 heme-binding domain. Heme-binding residues include His-566 and His-589. The 113-residue stretch at 647 to 759 (REKIPCKLID…KGPLGHIEYQ (113 aa)) folds into the FAD-binding FR-type domain. FAD contacts are provided by residues 699–702 (RAYT), 716–720 (VVKIY), Phe-721, Phe-728, 733–735 (QMS), and Thr-786.

The protein belongs to the nitrate reductase family. In terms of assembly, homodimer. It depends on FAD as a cofactor. Heme is required as a cofactor. Requires Mo-molybdopterin as cofactor.

It catalyses the reaction nitrite + NAD(+) + H2O = nitrate + NADH + H(+). Regulated by the nitrogen source and controlled by the circadian rhythm. Functionally, nitrate reductase is a key enzyme involved in the first step of nitrate assimilation in plants, fungi and bacteria. The protein is Nitrate reductase [NADH] 2 (NIA2) of Nicotiana tabacum (Common tobacco).